Reading from the N-terminus, the 140-residue chain is Dehydratase ustZ (140 aa).

In terms of domain architecture, EthD spans 18 to 113 (PGISTEDYRN…GPDHEKFADT (96 aa)).

The protein belongs to the tpcK family.

The enzyme catalyses naphtopyrone YWA1 = norrubrofusarin + H2O + H(+). The protein operates within secondary metabolite biosynthesis. Its function is as follows. Dehydratase; part of the gene cluster that mediates the biosynthesis of ustilaginoidins, dimeric gamma-naphthopyrones isolated from different fungal species. The first step in the biosynthesis of ustilaginoidins is the production of gamma-naphthopyrone precursor YWA1 by the non-reducing polyketide synthase ustP, via condensation of one acetyl-CoA starter unit with 6 malonyl-CoA units. YWA1 is then probably substrate of the ustZ to yield norrubrofusarin via a dehydration reaction. A key enzyme in the biosynthetic pathway is the laccase ustL, which catalyzes the oxidative dimerization of norrubrofusarin to ustilaginoidin A. It can produce the M- and P-atropisomers in varying amounts, depending on the reaction conditions. For the biosynthesis of 3-methylustilaginoid in derivatives such as chaetochromin A, a methylated derivative of YWA1 is required. The C-methylation is considered to be catalyzed by ustM, the phosphopantetheine attachment site of which indicates that it acts on the growing polyketide chain before release of the product. For the biosynthesis of chaetochromin A, it is assumed that saturation of the D2 double bond takes place before dimerization, and is probably catalyzed by an external reductase because no candidate gene was identified within the cluster. In Ustilaginoidea virens (Rice false smut fungus), this protein is Dehydratase ustZ.